The chain runs to 143 residues: Large ribosomal subunit protein uL13 (143 aa).

This sequence belongs to the universal ribosomal protein uL13 family. As to quaternary structure, part of the 50S ribosomal subunit.

In terms of biological role, this protein is one of the early assembly proteins of the 50S ribosomal subunit, although it is not seen to bind rRNA by itself. It is important during the early stages of 50S assembly. This chain is Large ribosomal subunit protein uL13, found in Finegoldia magna (strain ATCC 29328 / DSM 20472 / WAL 2508) (Peptostreptococcus magnus).